A 95-amino-acid chain; its full sequence is YcgL domain-containing protein APJL_0712 (95 aa).

Residues 4-88 (HLCAIYKSPK…PPENLLKTFL (85 aa)) form the YcgL domain.

The polypeptide is YcgL domain-containing protein APJL_0712 (Actinobacillus pleuropneumoniae serotype 3 (strain JL03)).